Reading from the N-terminus, the 84-residue chain is Sulfur carrier protein TusA (84 aa).

The active-site Cysteine persulfide intermediate is the Cys-19.

This sequence belongs to the sulfur carrier protein TusA family. Interacts with IscS.

The protein resides in the cytoplasm. It functions in the pathway tRNA modification. Sulfur carrier protein involved in sulfur trafficking in the cell. Part of a sulfur-relay system required for 2-thiolation during synthesis of 2-thiouridine of the modified wobble base 5-methylaminomethyl-2-thiouridine (mnm(5)s(2)U) in tRNA. Interacts with IscS and stimulates its cysteine desulfurase activity. Accepts an activated sulfur from IscS, which is then transferred to TusD, and thus determines the direction of sulfur flow from IscS to 2-thiouridine formation. Also appears to be involved in sulfur transfer for the biosynthesis of molybdopterin. The chain is Sulfur carrier protein TusA from Proteus mirabilis (strain HI4320).